A 123-amino-acid chain; its full sequence is Protein Wnt-3 (123 aa).

Ser1 is lipidated: O-palmitoleoyl serine; by PORCN. An intrachain disulfide couples Cys89 to Cys104. The N-linked (GlcNAc...) asparagine glycan is linked to Asn90.

This sequence belongs to the Wnt family. Post-translationally, palmitoleoylation is required for efficient binding to frizzled receptors. Depalmitoleoylation leads to Wnt signaling pathway inhibition.

Its subcellular location is the secreted. It localises to the extracellular space. The protein resides in the extracellular matrix. Functionally, ligand for members of the frizzled family of seven transmembrane receptors. Functions in the canonical Wnt signaling pathway that results in activation of transcription factors of the TCF/LEF family. Required for normal embryonic development. This chain is Protein Wnt-3 (WNT-3), found in Eptatretus stoutii (Pacific hagfish).